Consider the following 122-residue polypeptide: Large ribosomal subunit protein uL14 (122 aa).

Belongs to the universal ribosomal protein uL14 family. Part of the 50S ribosomal subunit. Forms a cluster with proteins L3 and L19. In the 70S ribosome, L14 and L19 interact and together make contacts with the 16S rRNA in bridges B5 and B8.

In terms of biological role, binds to 23S rRNA. Forms part of two intersubunit bridges in the 70S ribosome. The protein is Large ribosomal subunit protein uL14 of Paracidovorax citrulli (strain AAC00-1) (Acidovorax citrulli).